The following is a 72-amino-acid chain: Cold shock-like protein CspD (72 aa).

One can recognise a CSD domain in the interval 4–64; the sequence is GIVKWFNNAK…SDKGSHATKI (61 aa).

It localises to the cytoplasm. This is Cold shock-like protein CspD (cspD) from Haemophilus influenzae (strain ATCC 51907 / DSM 11121 / KW20 / Rd).